The chain runs to 227 residues: UPF0173 metal-dependent hydrolase BCAH187_A4741 (227 aa).

The protein belongs to the UPF0173 family.

This chain is UPF0173 metal-dependent hydrolase BCAH187_A4741, found in Bacillus cereus (strain AH187).